The primary structure comprises 418 residues: Tyrosine--tRNA ligase (418 aa).

Y34 is a binding site for L-tyrosine. A 'HIGH' region motif is present at residues P39 to H48. L-tyrosine is bound by residues Y169 and Q173. The short motif at K229–S233 is the 'KMSKS' region element. Residue K232 coordinates ATP. The 67-residue stretch at N352–Y418 folds into the S4 RNA-binding domain.

This sequence belongs to the class-I aminoacyl-tRNA synthetase family. TyrS type 1 subfamily. Homodimer.

It localises to the cytoplasm. The enzyme catalyses tRNA(Tyr) + L-tyrosine + ATP = L-tyrosyl-tRNA(Tyr) + AMP + diphosphate + H(+). Its function is as follows. Catalyzes the attachment of tyrosine to tRNA(Tyr) in a two-step reaction: tyrosine is first activated by ATP to form Tyr-AMP and then transferred to the acceptor end of tRNA(Tyr). This chain is Tyrosine--tRNA ligase, found in Streptococcus pneumoniae (strain 70585).